Consider the following 274-residue polypeptide: Penicillin-insensitive murein endopeptidase (274 aa).

An N-terminal signal peptide occupies residues 1-19 (MKKTAIALLAWFVSSASLA). 3 disulfide bridges follow: Cys-44–Cys-265, Cys-187–Cys-235, and Cys-216–Cys-223. Zn(2+)-binding residues include His-110, His-113, Asp-120, Asp-147, His-150, and His-211. The interval 225-274 (DQPLPPPGDGCGAELQSWFEPPKPGTTKPEKKTPPPLPPSCQALLDEHVL) is disordered.

The protein belongs to the peptidase M74 family. Dimer. Zn(2+) serves as cofactor.

The protein localises to the periplasm. Murein endopeptidase that cleaves the D-alanyl-meso-2,6-diamino-pimelyl amide bond that connects peptidoglycan strands. Likely plays a role in the removal of murein from the sacculus. The sequence is that of Penicillin-insensitive murein endopeptidase from Salmonella arizonae (strain ATCC BAA-731 / CDC346-86 / RSK2980).